Consider the following 912-residue polypeptide: Lateral signaling target protein 2 homolog (912 aa).

Residues 323-332 (NVNTSNNSDN) are compositionally biased toward low complexity. Disordered stretches follow at residues 323-360 (NVNT…SSFY), 455-610 (ADSG…ESSQ), 664-745 (NSSP…ASSA), and 769-846 (GGGS…APPR). Over residues 333 to 355 (SDSRVDDSPNDELRHESETRDNR) the composition is skewed to basic and acidic residues. A compositionally biased stretch (polar residues) spans 455–468 (ADSGLGTANPSVDN). Residues 486–505 (SSEEGEIDEYDNEEDDEDSD) are compositionally biased toward acidic residues. Residues 530–544 (YRTHKQQHHHRHRRS) are compositionally biased toward basic residues. Polar residues-rich tracts occupy residues 545 to 556 (SGSIMSATSSRK) and 572 to 590 (VPSN…DTSP). A compositionally biased stretch (low complexity) spans 591–610 (SSGNQSECSSTSSTTGESSQ). The segment covering 682 to 699 (DKPKEPDPTDLFEFRASE) has biased composition (basic and acidic residues). 4 stretches are compositionally biased toward polar residues: residues 705-717 (PGQN…QSIY), 735-745 (PGTSPIRASSA), 780-801 (ERSV…ATDS), and 822-834 (SRSS…NGTS). The FYVE-type zinc finger occupies 850–910 (DGDAPRCMAC…VCRDCYVREV (61 aa)). Zn(2+) contacts are provided by Cys-856, Cys-859, Cys-872, Cys-875, Cys-880, Cys-883, Cys-902, and Cys-905.

It belongs to the lst-2 family.

Functionally, negative regulator of epidermal growth factor receptor (EGFR) signaling. The protein is Lateral signaling target protein 2 homolog of Aedes aegypti (Yellowfever mosquito).